The primary structure comprises 462 residues: GTPase HflX (462 aa).

The Hflx-type G domain occupies 255–452 (PAVGIVGYTN…LLEEKIYNLP (198 aa)). GTP contacts are provided by residues 261 to 268 (GYTNAGKS), 286 to 290 (FATLD), 308 to 311 (DTVG), 374 to 377 (NKID), and 430 to 432 (SAY). Mg(2+) is bound by residues Ser268 and Thr288.

This sequence belongs to the TRAFAC class OBG-HflX-like GTPase superfamily. HflX GTPase family. As to quaternary structure, monomer. Associates with the 50S ribosomal subunit. The cofactor is Mg(2+).

It is found in the cytoplasm. Its function is as follows. GTPase that associates with the 50S ribosomal subunit and may have a role during protein synthesis or ribosome biogenesis. This Leptospira borgpetersenii serovar Hardjo-bovis (strain JB197) protein is GTPase HflX.